The sequence spans 493 residues: Guanosine-5'-triphosphate,3'-diphosphate pyrophosphatase (493 aa).

It belongs to the GppA/Ppx family. GppA subfamily.

It catalyses the reaction guanosine 3'-diphosphate 5'-triphosphate + H2O = guanosine 3',5'-bis(diphosphate) + phosphate + H(+). It participates in purine metabolism; ppGpp biosynthesis; ppGpp from GTP: step 2/2. In terms of biological role, catalyzes the conversion of pppGpp to ppGpp. Guanosine pentaphosphate (pppGpp) is a cytoplasmic signaling molecule which together with ppGpp controls the 'stringent response', an adaptive process that allows bacteria to respond to amino acid starvation, resulting in the coordinated regulation of numerous cellular activities. This Salmonella paratyphi B (strain ATCC BAA-1250 / SPB7) protein is Guanosine-5'-triphosphate,3'-diphosphate pyrophosphatase.